Reading from the N-terminus, the 196-residue chain is Glycerol-3-phosphate acyltransferase (196 aa).

The next 6 membrane-spanning stretches (helical) occupy residues 5 to 25 (VYLL…IIFC), 53 to 73 (FSAL…VLLA), 80 to 100 (PSEI…PLFF), 107 to 127 (GVAT…AAGL), 130 to 150 (WLIV…TALI), and 153 to 173 (FYIW…CCLL).

This sequence belongs to the PlsY family. Probably interacts with PlsX.

It localises to the cell inner membrane. The catalysed reaction is an acyl phosphate + sn-glycerol 3-phosphate = a 1-acyl-sn-glycero-3-phosphate + phosphate. Its pathway is lipid metabolism; phospholipid metabolism. Functionally, catalyzes the transfer of an acyl group from acyl-phosphate (acyl-PO(4)) to glycerol-3-phosphate (G3P) to form lysophosphatidic acid (LPA). This enzyme utilizes acyl-phosphate as fatty acyl donor, but not acyl-CoA or acyl-ACP. The sequence is that of Glycerol-3-phosphate acyltransferase from Actinobacillus pleuropneumoniae serotype 7 (strain AP76).